Consider the following 37-residue polypeptide: Dolichyl-diphosphooligosaccharide--protein glycosyltransferase subunit 4A (37 aa).

Residues 1-7 are Lumenal-facing; sequence MIDDQDL. The chain crosses the membrane as a helical span at residues 8–28; that stretch reads GFIANFLGIFIFALVIAYHYV. The Cytoplasmic segment spans residues 29–37; that stretch reads TADPKYEAT.

The protein belongs to the OST4 family. Component of the oligosaccharyltransferase (OST) complex.

The protein resides in the endoplasmic reticulum membrane. Its function is as follows. Subunit of the oligosaccharyl transferase (OST) complex that catalyzes the initial transfer of a defined glycan (Glc(3)Man(9)GlcNAc(2) in eukaryotes) from the lipid carrier dolichol-pyrophosphate to an asparagine residue within an Asn-X-Ser/Thr consensus motif in nascent polypeptide chains, the first step in protein N-glycosylation. N-glycosylation occurs cotranslationally and the complex associates with the Sec61 complex at the channel-forming translocon complex that mediates protein translocation across the endoplasmic reticulum (ER). All subunits are required for a maximal enzyme activity. This Arabidopsis thaliana (Mouse-ear cress) protein is Dolichyl-diphosphooligosaccharide--protein glycosyltransferase subunit 4A (OST4A).